Here is a 151-residue protein sequence, read N- to C-terminus: Potassium/proton antiporter CemA (151 aa).

2 helical membrane-spanning segments follow: residues 7 to 27 and 107 to 127; these read LPSL…SSSF and ILHF…FFLG.

This sequence belongs to the CemA family.

Its subcellular location is the plastid. The protein localises to the chloroplast inner membrane. The catalysed reaction is K(+)(in) + H(+)(out) = K(+)(out) + H(+)(in). In terms of biological role, contributes to K(+)/H(+) antiport activity by supporting proton efflux to control proton extrusion and homeostasis in chloroplasts in a light-dependent manner to modulate photosynthesis. Prevents excessive induction of non-photochemical quenching (NPQ) under continuous-light conditions. Indirectly promotes efficient inorganic carbon uptake into chloroplasts. In Aegilops crassa (Persian goatgrass), this protein is Potassium/proton antiporter CemA.